The primary structure comprises 137 residues: Small ribosomal subunit protein uS11 (137 aa).

The tract at residues 116 to 137 (EDVTPIPHDGTRPKGGRRGRRV) is disordered.

This sequence belongs to the universal ribosomal protein uS11 family. As to quaternary structure, part of the 30S ribosomal subunit.

Located on the platform of the 30S subunit. In Pyrococcus furiosus (strain ATCC 43587 / DSM 3638 / JCM 8422 / Vc1), this protein is Small ribosomal subunit protein uS11.